The following is a 467-amino-acid chain: Putative laccase-16 (467 aa).

Plastocyanin-like domains lie at 7–88 (VLGS…PKHG), 98–225 (KEIP…YTDS), and 318–451 (DFPN…KDGK). H22, H24, H67, and H69 together coordinate Cu cation. 8 residues coordinate Cu cation: H368, H371, H373, H430, C431, H432, H436, and M441.

Belongs to the multicopper oxidase family. Requires Cu cation as cofactor.

The protein localises to the secreted. It is found in the extracellular space. The protein resides in the apoplast. The enzyme catalyses 4 hydroquinone + O2 = 4 benzosemiquinone + 2 H2O. Functionally, lignin degradation and detoxification of lignin-derived products. This chain is Putative laccase-16 (LAC16), found in Oryza sativa subsp. japonica (Rice).